A 308-amino-acid chain; its full sequence is MGIKALAGRDLLAIADLTIEEMKSLLQLAADLKSGVLKPHCRKILGLLFYKASTRTRVSFTAAMYQLGGQVLDLNPSVTQVGRGEPIQDTARVLDRYIDILAVRTFKQTDLQTFADHAKMPIINALSDLEHPCQILADLQTIKECFGKLEGLTVTYLGDGNNVAHSLILGGVMMGMTVRVATPKNYEPLAEIVQQAQQIAAPGGKVELTDDPKAAAQGSHILYTDVWASMGQEDLADSRIPIFQPYQINQELLALADPEAIVLHCLPAHRGEEITDAVMEGPQSRLWDQAENRMHAQKALMVALLGLV.

Carbamoyl phosphate contacts are provided by residues 53 to 56, Q80, R104, and 131 to 134; these read STRT and HPCQ. L-ornithine contacts are provided by residues N162, D225, and 229–230; that span reads SM. Carbamoyl phosphate is bound by residues 265-266 and R293; that span reads CL.

It belongs to the aspartate/ornithine carbamoyltransferase superfamily. OTCase family.

Its subcellular location is the cytoplasm. The enzyme catalyses carbamoyl phosphate + L-ornithine = L-citrulline + phosphate + H(+). Its pathway is amino-acid biosynthesis; L-arginine biosynthesis; L-arginine from L-ornithine and carbamoyl phosphate: step 1/3. Reversibly catalyzes the transfer of the carbamoyl group from carbamoyl phosphate (CP) to the N(epsilon) atom of ornithine (ORN) to produce L-citrulline. The sequence is that of Ornithine carbamoyltransferase (argF) from Synechocystis sp. (strain ATCC 27184 / PCC 6803 / Kazusa).